The sequence spans 263 residues: Oxidoreductase UcpA (263 aa).

An NAD(+)-binding site is contributed by 10-32 (LITGASQGIGEGIARVFARHGAN). Substrate is bound at residue Ser-141. The active-site Proton acceptor is the Tyr-155.

This sequence belongs to the short-chain dehydrogenases/reductases (SDR) family.

In Salmonella typhi, this protein is Oxidoreductase UcpA (ucpA).